A 349-amino-acid chain; its full sequence is Small ribosomal subunit biogenesis GTPase RsgA (349 aa).

Residues 1 to 11 show a composition bias toward basic residues; it reads MSKKKLSKGQQ. Residues 1–29 form a disordered region; the sequence is MSKKKLSKGQQRRVSANHQRRLKKTESKV. The CP-type G domain occupies 102–272; the sequence is HSVLTRPDYY…VIDSPGVREF (171 aa). GTP-binding positions include 158–161 and 212–220; these read NKID and GQSGVGKSS. Zn(2+) contacts are provided by C296, C301, H303, and C309.

This sequence belongs to the TRAFAC class YlqF/YawG GTPase family. RsgA subfamily. As to quaternary structure, monomer. Associates with 30S ribosomal subunit, binds 16S rRNA. Zn(2+) is required as a cofactor.

It localises to the cytoplasm. In terms of biological role, one of several proteins that assist in the late maturation steps of the functional core of the 30S ribosomal subunit. Helps release RbfA from mature subunits. May play a role in the assembly of ribosomal proteins into the subunit. Circularly permuted GTPase that catalyzes slow GTP hydrolysis, GTPase activity is stimulated by the 30S ribosomal subunit. The polypeptide is Small ribosomal subunit biogenesis GTPase RsgA (Pectobacterium carotovorum subsp. carotovorum (strain PC1)).